The chain runs to 556 residues: Membrane protein insertase YidC (556 aa).

5 helical membrane-spanning segments follow: residues 6-26 (IVLY…WQID), 332-352 (LDLT…FSLM), 358-378 (VVGN…LAFY), 428-448 (LGGC…YWVL), and 501-521 (VMMF…SGLV).

The protein belongs to the OXA1/ALB3/YidC family. Type 1 subfamily. As to quaternary structure, interacts with the Sec translocase complex via SecD. Specifically interacts with transmembrane segments of nascent integral membrane proteins during membrane integration.

The protein resides in the cell inner membrane. Functionally, required for the insertion and/or proper folding and/or complex formation of integral membrane proteins into the membrane. Involved in integration of membrane proteins that insert both dependently and independently of the Sec translocase complex, as well as at least some lipoproteins. Aids folding of multispanning membrane proteins. The sequence is that of Membrane protein insertase YidC from Legionella pneumophila (strain Paris).